A 539-amino-acid chain; its full sequence is Glucose-6-phosphate isomerase (539 aa).

Catalysis depends on glutamate 353, which acts as the Proton donor. Residues histidine 384 and lysine 505 contribute to the active site.

Belongs to the GPI family.

The protein resides in the cytoplasm. It catalyses the reaction alpha-D-glucose 6-phosphate = beta-D-fructose 6-phosphate. Its pathway is carbohydrate biosynthesis; gluconeogenesis. It functions in the pathway carbohydrate degradation; glycolysis; D-glyceraldehyde 3-phosphate and glycerone phosphate from D-glucose: step 2/4. Functionally, catalyzes the reversible isomerization of glucose-6-phosphate to fructose-6-phosphate. This chain is Glucose-6-phosphate isomerase, found in Ralstonia pickettii (strain 12J).